The sequence spans 199 residues: Probable GTP-binding protein EngB (199 aa).

Residues 22-196 enclose the EngB-type G domain; it reads NWPEFAFSGR…GKFILDLVDS (175 aa). GTP contacts are provided by residues 30–37, 57–61, 75–78, 142–145, and 175–177; these read GRSNVGKS, GRTQS, DLPG, TKVD, and FSA. The Mg(2+) site is built by serine 37 and threonine 59.

The protein belongs to the TRAFAC class TrmE-Era-EngA-EngB-Septin-like GTPase superfamily. EngB GTPase family. The cofactor is Mg(2+).

In terms of biological role, necessary for normal cell division and for the maintenance of normal septation. The protein is Probable GTP-binding protein EngB of Halothermothrix orenii (strain H 168 / OCM 544 / DSM 9562).